The following is a 1148-amino-acid chain: MTSSDSSVNTTSSSFGNISISSPNHSSSTPPLNNGNGNNVSASETELKKHVLYSLQCLDEKTLTLKVKLDHLNKLVELKKSIPDLNKLGISPTQLYKSVRPFIALPPKTIRTAGLRVMRYYLSNSNNVKELLDLKVQYFITRSLERDKHSEPERIQALKIIRTIMEIDCSLMPHCFVKGLVSIAENQEDNFCRVCLECLTEISIRNPQISSHCGGIRTVFDAVLDPFYQGIQESLLICILYLLSDKDTRIYIRPKSDLEIILAPLTNSFNIGVKLKGASKEKEKEKEKEDEVAMKKWTASSKAVLTLIKSWIGIISLNSDDQGLKSVVDTLRMPQIELQEKALDSIFEIFRVQLPKSIQETFGPQKATQTFNFGSETLQDLPSRTRSLRHNLLNNYLSVLLIAFIDNGLIEGLVYLGNYVANRDGMSEQEKECSKNISLKSTVLLAELLHMSNALLPPSQCAKLQTLPSLVNSAISFRLDPRLRSSSNTMVTNLHSYSHNKSSTTLMDSTLAIGLTGANKWRRIKGQDRRLDKVDDVKMKMEWHMDDNQFQQKIKDTQVLVTKDYQKWSWELMFELLEGPLNNPQHLSNTLKTKFIKRILSFLRPNKKLFSTMAWTTENLKYVRTACVALEVLISHEIGFDFLKDNKTIIQIADMLKVELDYNIKPPPSSSSSSENKKDNVRLLNPEKVLKTMSREYFTMLGTLSSNLLGLEILARNNIFDYIKPLAELPGRDDLSHLIMTSLDYNVNGASRTILQKILTSSSRVVRYLATKYLRFLLRSGVQDFSNWGVELLVQQLNDVDAKVSALSLNVLDEACDDPSCLEVLIDLKPNLLKLGKPGKSLLLRFLSSPKGLENLLQNNGFVEQEEQLWITSENATYVNAIESAVSESLSPSVWRFKEAPDGSSTSGVYLPPHFFGELAKTEKGCQLIRKSNNYQRFLKIIQDPTAKQLDKRASLIAIGHIGSSVDGYSFVKESDTIKLLIGIAEKSQCLALRSTCFYALGMISCIEEAQPIFNSFGWESPSDLNSRILLPKDLKNSTFLSVPQYQYQGSWADHSFETLPSNHFSDPIKNEIISFVGNLSSHITAEGASKNLKRLKIKYPDHFATSEILNAVFILLNTFKYRLGARRFIYDLFDVAIFSSDPYHDLN.

Over residues 1-34 (MTSSDSSVNTTSSSFGNISISSPNHSSSTPPLNN) the composition is skewed to low complexity. Residues 1-41 (MTSSDSSVNTTSSSFGNISISSPNHSSSTPPLNNGNGNNVS) are disordered. Residues 803–914 (KVSALSLNVL…STSGVYLPPH (112 aa)) enclose the N-terminal Ras-GEF domain.

The protein belongs to the RICTOR family. Part of a complex, TORC2, consisting of tor, lst8, piaA and ripA. Additional proteins, such as 14-3-3 and heat-shock proteins, may also belong to the TORC2 complex.

The protein localises to the cytoplasm. Its function is as follows. Regulates cell growth, chemotaxis, signal relay and the actin cytoskeleton. Required for chemoattractant receptor and G protein-mediated activation of the 12 transmembrane domain adenylyl cyclase. Functions as a part of protein complex TORC2. TORC2, is presumed to be indirectly negatively modulated by rapamycin and regulates actin polarization. TORC2, but not TORC1, negatively regulates phagocytosis. This protein and dagA protein CRAC, a cytosolic regulator, are both essential for activation of the enzyme adenylyl cyclase. This protein and CRAC do not function redundantly. Both proteins are integral components of the adenylyl cyclase activation pathway. This chain is Protein pianissimo A (piaA), found in Dictyostelium discoideum (Social amoeba).